A 141-amino-acid chain; its full sequence is Transcription antitermination protein NusB (141 aa).

The protein belongs to the NusB family.

Its function is as follows. Involved in transcription antitermination. Required for transcription of ribosomal RNA (rRNA) genes. Binds specifically to the boxA antiterminator sequence of the ribosomal RNA (rrn) operons. This Neisseria meningitidis serogroup B (strain ATCC BAA-335 / MC58) protein is Transcription antitermination protein NusB.